Here is a 203-residue protein sequence, read N- to C-terminus: MRVLTRFMLSAADARQFPAAGAPEIAFLGRSNVGKSSLINAIVGSKIAKTSSTPGRTQTINFFEIRRPGKPRPDWIFADLPGYGYARVPKELTAEWPKFIDPYLHERPTLALCVSIVDVSVPPQKKDLELLNWLRHVGRPFVVVGTKIDRVSGNQLRNNLLKLKEELLVEEVVPFSAKGTTGHNELWKKIFEAAGTDAPATAG.

The EngB-type G domain maps to 21-196 (GAPEIAFLGR…WKKIFEAAGT (176 aa)). GTP contacts are provided by residues 29-36 (GRSNVGKS), 55-59 (GRTQT), 79-82 (DLPG), 146-149 (TKID), and 175-177 (FSA). Mg(2+) is bound by residues S36 and T57.

Belongs to the TRAFAC class TrmE-Era-EngA-EngB-Septin-like GTPase superfamily. EngB GTPase family. Mg(2+) is required as a cofactor.

Necessary for normal cell division and for the maintenance of normal septation. This is Probable GTP-binding protein EngB from Koribacter versatilis (strain Ellin345).